A 118-amino-acid polypeptide reads, in one-letter code: Large ribosomal subunit protein bL19 (118 aa).

This sequence belongs to the bacterial ribosomal protein bL19 family.

Functionally, this protein is located at the 30S-50S ribosomal subunit interface and may play a role in the structure and function of the aminoacyl-tRNA binding site. The protein is Large ribosomal subunit protein bL19 of Coprothermobacter proteolyticus (strain ATCC 35245 / DSM 5265 / OCM 4 / BT).